A 211-amino-acid chain; its full sequence is LexA repressor (211 aa).

The H-T-H motif DNA-binding region spans 27–47 (QTEIARAFGFKGVRAAQYHLE). Residues S131 and K168 each act as for autocatalytic cleavage activity in the active site.

It belongs to the peptidase S24 family. In terms of assembly, homodimer.

It carries out the reaction Hydrolysis of Ala-|-Gly bond in repressor LexA.. Represses a number of genes involved in the response to DNA damage (SOS response), including recA and lexA. In the presence of single-stranded DNA, RecA interacts with LexA causing an autocatalytic cleavage which disrupts the DNA-binding part of LexA, leading to derepression of the SOS regulon and eventually DNA repair. The polypeptide is LexA repressor (Stenotrophomonas maltophilia (strain R551-3)).